Reading from the N-terminus, the 295-residue chain is 4-diphosphocytidyl-2-C-methyl-D-erythritol kinase (295 aa).

Residue Lys22 is part of the active site. 106–116 (PAGGGFGGGSS) serves as a coordination point for ATP. Asp148 is a catalytic residue.

It belongs to the GHMP kinase family. IspE subfamily.

It carries out the reaction 4-CDP-2-C-methyl-D-erythritol + ATP = 4-CDP-2-C-methyl-D-erythritol 2-phosphate + ADP + H(+). The protein operates within isoprenoid biosynthesis; isopentenyl diphosphate biosynthesis via DXP pathway; isopentenyl diphosphate from 1-deoxy-D-xylulose 5-phosphate: step 3/6. Catalyzes the phosphorylation of the position 2 hydroxy group of 4-diphosphocytidyl-2C-methyl-D-erythritol. This Xanthomonas campestris pv. campestris (strain 8004) protein is 4-diphosphocytidyl-2-C-methyl-D-erythritol kinase.